An 82-amino-acid polypeptide reads, in one-letter code: Putative membrane protein insertion efficiency factor (82 aa).

The protein belongs to the UPF0161 family.

Its subcellular location is the cell membrane. Could be involved in insertion of integral membrane proteins into the membrane. In Streptococcus uberis (strain ATCC BAA-854 / 0140J), this protein is Putative membrane protein insertion efficiency factor.